The primary structure comprises 606 residues: Chaperone protein DnaK (606 aa).

Thr174 is modified (phosphothreonine; by autocatalysis). Positions 579 to 593 (ASAAGNPGQGQTNEN) are enriched in polar residues. The disordered stretch occupies residues 579–606 (ASAAGNPGQGQTNENPGGKTIDGDYKVN).

This sequence belongs to the heat shock protein 70 family.

Functionally, acts as a chaperone. This is Chaperone protein DnaK from Dictyoglomus thermophilum (strain ATCC 35947 / DSM 3960 / H-6-12).